We begin with the raw amino-acid sequence, 390 residues long: Enoyl-[acyl-carrier-protein] reductase [NADH], chloroplastic (390 aa).

A chloroplast-targeting transit peptide spans 1-74; it reads MAATAASSLQ…CKRPFSFSTR (74 aa). The NADP(+) site is built by L53 and N170. S239 functions as the Proton donor in the catalytic mechanism. Positions 282 and 314 each coordinate NADP(+). The active-site Lowers pKa of active site Tyr is the K282.

This sequence belongs to the short-chain dehydrogenases/reductases (SDR) family. FabI subfamily. In terms of assembly, homotetramer. In terms of tissue distribution, expressed in flowers and siliques and at lower levels in roots and leaves (at protein level).

It is found in the plastid. Its subcellular location is the chloroplast. The enzyme catalyses a 2,3-saturated acyl-[ACP] + NAD(+) = a (2E)-enoyl-[ACP] + NADH + H(+). It participates in lipid metabolism; fatty acid biosynthesis. Inhibited by the phytotoxin cyperin and the synthetic antimicrobial compound triclosan. Its function is as follows. Catalyzes the NAD-dependent reduction of a carbon-carbon double bond in an enoyl moiety that is covalently linked to an acyl carrier protein (ACP). Catalyzes the last reduction step in the de novo synthesis cycle of fatty acids. Involved in the elongation cycle of fatty acids which are used in lipid metabolism. Required for normal plant growth. In Arabidopsis thaliana (Mouse-ear cress), this protein is Enoyl-[acyl-carrier-protein] reductase [NADH], chloroplastic (MOD1).